Consider the following 1648-residue polypeptide: AT-rich interactive domain-containing protein arid-1 (1648 aa).

Disordered stretches follow at residues 150–270 (ISEA…PVIN) and 284–307 (RKLE…EEKL). Composition is skewed to acidic residues over residues 166-193 (DDDE…DTEE), 219-228 (TQSEESSADS), and 251-260 (SDEEDQEDLA). A compositionally biased stretch (polar residues) spans 261 to 270 (TTDSENPVIN). The 91-residue stretch at 655 to 745 (AETKDLFVAM…FLESYLAINT (91 aa)) folds into the ARID domain. Disordered stretches follow at residues 763-935 (VLPG…KEDT), 1095-1563 (SEKR…KPHD), and 1628-1648 (KTAS…TPRP). Over residues 848–860 (SDDVTDVPDDMTD) the composition is skewed to acidic residues. 2 stretches are compositionally biased toward basic and acidic residues: residues 861–878 (HEDL…ERKS) and 925–935 (SEGRGPRKEDT). Acidic residues-rich tracts occupy residues 1102-1112 (DDDESSDSDTD) and 1145-1154 (GDEEAEEEVK). The span at 1165–1185 (QESPPTTSQGTTTPETAATGG) shows a compositional bias: low complexity. The span at 1195–1208 (YPPVPEELVPPPPV) shows a compositional bias: pro residues. The span at 1213–1251 (FPSTDRFSSGGSSNYPTLSRQGSINSMASPMFSPNSDLS) shows a compositional bias: polar residues. Positions 1313–1326 (RASERSIDSASEHH) are enriched in basic and acidic residues. Over residues 1348–1357 (ISTTQPTDTS) the composition is skewed to polar residues. The span at 1377–1392 (ASPTLLTSGPLTLSSS) shows a compositional bias: low complexity. Residues 1393–1404 (APPPPPASPAPP) show a composition bias toward pro residues. Low complexity-rich tracts occupy residues 1474–1486 (STTT…PKSI) and 1531–1541 (TPTTMTTSTPT). Positions 1542-1551 (RADSFQTQKN) are enriched in polar residues.

It localises to the nucleus. In terms of biological role, DNA-binding protein which modulates activity of several transcription factors. Plays a role in the modulation of endoplasmic reticulum (ER) homeostasis during chemical and pathogen stress, including exposure to the Gram-negative bacterium P.aeruginosa. The chain is AT-rich interactive domain-containing protein arid-1 from Caenorhabditis elegans.